A 121-amino-acid chain; its full sequence is Ribosome-binding factor A (121 aa).

It belongs to the RbfA family. In terms of assembly, monomer. Binds 30S ribosomal subunits, but not 50S ribosomal subunits or 70S ribosomes.

Its subcellular location is the cytoplasm. Its function is as follows. One of several proteins that assist in the late maturation steps of the functional core of the 30S ribosomal subunit. Associates with free 30S ribosomal subunits (but not with 30S subunits that are part of 70S ribosomes or polysomes). Required for efficient processing of 16S rRNA. May interact with the 5'-terminal helix region of 16S rRNA. This Lactobacillus acidophilus (strain ATCC 700396 / NCK56 / N2 / NCFM) protein is Ribosome-binding factor A.